Here is a 2089-residue protein sequence, read N- to C-terminus: Mediator of DNA damage checkpoint protein 1 (2089 aa).

The segment covering 1-19 (MEDTQAIDWDVEEEEETEQ) has biased composition (acidic residues). The disordered stretch occupies residues 1 to 22 (MEDTQAIDWDVEEEEETEQSSE). The interaction with CHEK2 stretch occupies residues 1-150 (MEDTQAIDWD…SRGPLTVEET (150 aa)). The interval 2-220 (EDTQAIDWDV…PFAFNLNSDT (219 aa)) is interaction with the MRN complex. The residue at position 4 (T4) is a Phosphothreonine; by ATM. The FHA domain maps to 54 to 105 (NVVGRMPDCSVALPFPSISKQHAEIEILAWDKAPILRDCGSLNGTQILRPPK). The residue at position 108 (S108) is a Phosphoserine. Residues 145–568 (LTVEETPRVQ…PAKLLVVSLE (424 aa)) form a required for nuclear localization (NLS1) region. T146 carries the post-translational modification Phosphothreonine. S168 is modified (phosphoserine; by CK2). Phosphoserine is present on S176. Disordered regions lie at residues 185–248 (RTTS…AKQS), 261–280 (DQPL…GAGN), and 286–317 (GVIL…AEVH). Residues S196 and S218 each carry the phosphoserine; by CK2 modification. A Phosphothreonine; by CK2 modification is found at T220. Residues 261 to 274 (DQPLVKERDNDTKV) show a composition bias toward basic and acidic residues. The residue at position 299 (S299) is a Phosphoserine; by CK2. Residue T301 is modified to Phosphothreonine; by CK2. The span at 306 to 317 (DSRPPGRPAEVH) shows a compositional bias: basic and acidic residues. A Phosphoserine; by CK2 modification is found at S329. T331 is modified (phosphothreonine; by CK2). At S372 the chain carries Phosphoserine. Residue S376 is modified to Phosphoserine; by CK2. T378 bears the Phosphothreonine; by CK2 mark. A phosphoserine mark is found at S394 and S397. S402 bears the Phosphoserine; by CK2 mark. T404 carries the post-translational modification Phosphothreonine; by CK2. The residue at position 411 (S411) is a Phosphoserine. T449 is subject to Phosphothreonine. The residue at position 453 (S453) is a Phosphoserine; by CK2. T455 is subject to Phosphothreonine; by CK2. Positions 482-515 (RAHSEKDQPPFGDSDDSVEADKSSPGIHLERSQA) are disordered. 6 positions are modified to phosphoserine: S485, S495, S498, S504, S505, and S513. T523 carries the post-translational modification Phosphothreonine. A Phosphoserine modification is found at S590. K616 participates in a covalent cross-link: Glycyl lysine isopeptide (Lys-Gly) (interchain with G-Cter in SUMO1); alternate. Residue K616 forms a Glycyl lysine isopeptide (Lys-Gly) (interchain with G-Cter in SUMO2); alternate linkage. Disordered regions lie at residues 653 to 689 (DTLG…DNYG) and 780 to 1887 (SPPR…TKLN). Residues 671-685 (GREREQHVGGTKDSE) are compositionally biased toward basic and acidic residues. S780 and S793 each carry phosphoserine. K812 is subject to N6-acetyllysine. 4 stretches are compositionally biased toward basic and acidic residues: residues 819-844 (ETAE…ERQT), 851-862 (ELTKGKQDREQK), 868-905 (DTQR…EKQV), and 914-951 (AFER…RGEP). A phosphoserine mark is found at S955 and S998. The segment covering 955-965 (SQDQKGQASSP) has biased composition (polar residues). A compositionally biased stretch (basic and acidic residues) spans 1016 to 1031 (KASRIRAAEKVSRGDQ). Position 1033 is a phosphoserine (S1033). Pro residues predominate over residues 1040-1051 (PTVPEAPAPPQK). Phosphoserine is present on residues S1068 and S1086. The segment covering 1103–1113 (PKPKIRTRKSS) has biased composition (basic residues). Residues 1129-1156 (PSTSTAQPVTPKPTSQATRSRTNRSSVK) are compositionally biased toward polar residues. Residues 1148 to 1610 (SRTNRSSVKT…TNRSSVKTPE (463 aa)) are interaction with the PRKDC complex. T1157 is subject to Phosphothreonine. A compositionally biased stretch (polar residues) spans 1169–1187 (QPSTSTDQPVTSEPTSQVT). T1198 is subject to Phosphothreonine. Polar residues predominate over residues 1210 to 1228 (QPSTSTDRPVTSEPTSQAT). Phosphoserine is present on S1235. Residue T1239 is modified to Phosphothreonine. Residues 1251 to 1268 (QPSTSTDQPVTSEPTYQA) are compositionally biased toward polar residues. Phosphothreonine occurs at positions 1280 and 1302. Composition is skewed to low complexity over residues 1304–1318 (KPTS…NMSS) and 1347–1359 (TSRT…NMSS). Residues 1375-1391 (PSTSTEQPVTPEPTSRA) are compositionally biased toward polar residues. S1399 and S1400 each carry phosphoserine. K1402 bears the N6-acetyllysine mark. Residue T1403 is modified to Phosphothreonine. A Glycyl lysine isopeptide (Lys-Gly) (interchain with G-Cter in SUMO1); alternate cross-link involves residue K1413. Residue K1413 forms a Glycyl lysine isopeptide (Lys-Gly) (interchain with G-Cter in SUMO2); alternate linkage. 4 stretches are compositionally biased toward polar residues: residues 1416–1444 (PSTS…SVKT), 1456–1475 (QPST…QATR), 1498–1514 (ASAS…TSRT), and 1538–1555 (QPST…TSRA). Phosphothreonine is present on residues T1425 and T1466. The residue at position 1548 (T1548) is a Phosphothreonine. At S1564 the chain carries Phosphoserine. Phosphothreonine is present on residues T1567 and T1589. A compositionally biased stretch (polar residues) spans 1579 to 1596 (QPSTSRNQLVTPEPTSRA). Phosphoserine is present on S1604. T1608 bears the Phosphothreonine mark. Pro residues predominate over residues 1611–1620 (PVVPTAPEPH). A compositionally biased stretch (polar residues) spans 1624–1636 (STDQPVTPKLTSR). Phosphothreonine occurs at positions 1630, 1664, and 1671. The segment covering 1678 to 1689 (GGQSKTLRSSTV) has biased composition (polar residues). S1681 bears the Phosphoserine mark. T1697 is subject to Phosphothreonine. The segment covering 1698-1719 (PEFQSPVTTDQPISPEPITQPS) has biased composition (polar residues). The segment at 1698–2089 (PEFQSPVTTD…VLSPLEMSST (392 aa)) is required for nuclear localization (NLS2). A phosphoserine mark is found at S1702 and S1711. A Glycyl lysine isopeptide (Lys-Gly) (interchain with G-Cter in SUMO2) cross-link involves residue K1740. A Phosphoserine modification is found at S1775. Residue K1790 forms a Glycyl lysine isopeptide (Lys-Gly) (interchain with G-Cter in SUMO2) linkage. Phosphothreonine is present on T1800. Phosphoserine is present on S1820. Residues 1823–1836 (HQKQPQRGEVSQKT) are compositionally biased toward polar residues. A Glycyl lysine isopeptide (Lys-Gly) (interchain with G-Cter in SUMO1); alternate cross-link involves residue K1840. Residue K1840 forms a Glycyl lysine isopeptide (Lys-Gly) (interchain with G-Cter in SUMO2); alternate linkage. Over residues 1847-1857 (AEKPGKEEDVV) the composition is skewed to basic and acidic residues. A Phosphothreonine modification is found at T1858. 2 consecutive BRCT domains span residues 1892–1970 (APKV…EYVV) and 1991–2082 (RERR…FVLS). R1943 bears the Omega-N-methylarginine mark.

As to quaternary structure, homodimer. Interacts with H2AX, which requires phosphorylation of H2AX on 'Ser-139'. Interacts with the MRN complex, composed of MRE11, RAD50, and NBN. Interacts with CHEK2, which requires ATM-mediated phosphorylation of 'Thr-68' within the FHA domain of CHEK2. Interacts constitutively with the BRCA1-BARD1 complex, SMC1A and TP53BP1. Interacts with ATM and FANCD2, and these interactions are reduced upon DNA damage. Also interacts with the PRKDC complex, composed of XRCC6/KU70, XRCC5/KU80 and PRKDC/XRCC7. This interaction may be required for PRKDC autophosphorylation, which is essential for DNA double strand break (DSB) repair. When phosphorylated by ATM, interacts with RNF8 (via FHA domain). Interacts with CEP164. When phosphorylated, interacts with APTX (via FHA-like domain). Interacts (when phosphorylated) with TOPBP1; promoting TOPBP1 localization to DNA damage sites during mitosis. Interacts (when phosphorylated) with NBN; promoting NBN and MRN complex localization to DNA damage sites. In terms of processing, phosphorylated upon exposure to ionizing radiation (IR), ultraviolet radiation (UV), and hydroxyurea (HU). Phosphorylation in response to IR requires ATM, NBN, and possibly CHEK2. Also phosphorylated during the G2/M phase of the cell cycle and during activation of the mitotic spindle checkpoint. Phosphorylation at Thr-4 by ATM stabilizes and enhances homodimerization via the FHA domain. Phosphorylated at Ser-168 and Ser-196 by CK2 in response to DNA damage during mitosis, promoting interaction with TOPBP1. Phosphorylated by CK2 in response to DNA damage, promoting interaction with NBN and recruitment of the MRN complex to DNA damage sites. Post-translationally, sumoylation at Lys-1840 by PIAS4 following DNA damage promotes ubiquitin-mediated degradation. Ubiquitinated by RNF4, leading to proteasomal degradation; undergoes 'Lys-48'-linked polyubiquitination. Highly expressed in testis.

It localises to the nucleus. Its subcellular location is the chromosome. Histone reader protein required for checkpoint-mediated cell cycle arrest in response to DNA damage within both the S phase and G2/M phases of the cell cycle. Specifically recognizes and binds histone H2AX phosphorylated at 'Ser-139', a marker of DNA damage, serving as a scaffold for the recruitment of DNA repair and signal transduction proteins to discrete foci of DNA damage sites. Also required for downstream events subsequent to the recruitment of these proteins. These include phosphorylation and activation of the ATM, CHEK1 and CHEK2 kinases, and stabilization of TP53/p53 and apoptosis. ATM and CHEK2 may also be activated independently by a parallel pathway mediated by TP53BP1. Required for chromosomal stability during mitosis by promoting recruitment of TOPBP1 to DNA double strand breaks (DSBs): TOPBP1 forms filamentous assemblies that bridge MDC1 and tether broken chromosomes during mitosis. Required for the repair of DSBs via homologous recombination by promoting recruitment of NBN component of the MRN complex to DSBs. This is Mediator of DNA damage checkpoint protein 1 from Homo sapiens (Human).